Consider the following 154-residue polypeptide: Ribosome maturation factor RimP (154 aa).

Belongs to the RimP family.

The protein localises to the cytoplasm. Its function is as follows. Required for maturation of 30S ribosomal subunits. The protein is Ribosome maturation factor RimP of Haemophilus ducreyi (strain 35000HP / ATCC 700724).